Consider the following 263-residue polypeptide: Small ribosomal subunit protein eS4 (263 aa).

The region spanning 42 to 104 is the S4 RNA-binding domain; sequence LPLIIFLRNR…TGEHFRLVYD (63 aa).

The protein belongs to the eukaryotic ribosomal protein eS4 family. Component of the small ribosomal subunit.

It localises to the cytoplasm. In terms of biological role, component of the small ribosomal subunit. The ribosome is a large ribonucleoprotein complex responsible for the synthesis of proteins in the cell. In Xenopus laevis (African clawed frog), this protein is Small ribosomal subunit protein eS4 (rps4).